A 307-amino-acid chain; its full sequence is Mitochondrial glycine transporter YMC1 (307 aa).

Solcar repeat units follow at residues 26 to 106, 121 to 204, and 218 to 305; these read VKDL…MKRF, PQYY…LIAN, and PAWK…AMRL. Helical transmembrane passes span 29 to 49, 83 to 103, 118 to 138, 183 to 203, 223 to 243, and 277 to 298; these read LLAG…FDTT, LTPL…NEAM, LSLP…SFLA, TILR…ALIA, CIFG…LDVI, and FFKG…TFAT.

It belongs to the mitochondrial carrier (TC 2.A.29) family.

It localises to the mitochondrion inner membrane. Secondary mitochondrial glycine transporter required for the biosynthesis of heme at high glycine concentrations. Imports the precursor glycine into the mitochondrial matrix, where it is condensed with succinyl-CoA to produce 5-aminolevulinate (ALA), the first step of heme biosynthesis. The polypeptide is Mitochondrial glycine transporter YMC1 (Saccharomyces cerevisiae (strain ATCC 204508 / S288c) (Baker's yeast)).